The sequence spans 211 residues: Stromal cell-derived factor 2 (211 aa).

A signal peptide spans 1–18 (MAVLSLLLLGGLWSAVGA). MIR domains lie at 21–75 (MAVV…IRGK), 83–138 (GTPI…VLCN), and 139–193 (GPYW…AMEG).

In terms of tissue distribution, ubiquitously expressed with highest expression in liver and kidney.

The protein resides in the secreted. The chain is Stromal cell-derived factor 2 (Sdf2) from Mus musculus (Mouse).